A 185-amino-acid polypeptide reads, in one-letter code: Ribosome-recycling factor (185 aa).

Belongs to the RRF family.

It localises to the cytoplasm. In terms of biological role, responsible for the release of ribosomes from messenger RNA at the termination of protein biosynthesis. May increase the efficiency of translation by recycling ribosomes from one round of translation to another. This Arthrobacter sp. (strain FB24) protein is Ribosome-recycling factor.